The sequence spans 547 residues: Chaperonin GroEL (547 aa).

Residues 30–33, lysine 51, 87–91, glycine 415, 479–481, and aspartate 495 contribute to the ATP site; these read TLGP, DGTTT, and NAA.

It belongs to the chaperonin (HSP60) family. As to quaternary structure, forms a cylinder of 14 subunits composed of two heptameric rings stacked back-to-back. Interacts with the co-chaperonin GroES.

The protein resides in the cytoplasm. The enzyme catalyses ATP + H2O + a folded polypeptide = ADP + phosphate + an unfolded polypeptide.. Together with its co-chaperonin GroES, plays an essential role in assisting protein folding. The GroEL-GroES system forms a nano-cage that allows encapsulation of the non-native substrate proteins and provides a physical environment optimized to promote and accelerate protein folding. This Bordetella pertussis (strain Tohama I / ATCC BAA-589 / NCTC 13251) protein is Chaperonin GroEL.